A 370-amino-acid chain; its full sequence is Platelet-derived growth factor D (370 aa).

The first 23 residues, 1–23 (MQRLVLVSILLCANFSCYPDTFA), serve as a signal peptide directing secretion. The CUB domain maps to 52 to 170 (REENIQVTSN…PGFKIYYSFV (119 aa)). Cysteines 109 and 131 form a disulfide. The N-linked (GlcNAc...) asparagine glycan is linked to Asn-276. 2 disulfides stabilise this stretch: Cys-302–Cys-360 and Cys-306–Cys-362.

The protein belongs to the PDGF/VEGF growth factor family. Homodimer; disulfide-linked. Interacts with PDGFRB homodimers, and with heterodimers formed by PDGFRA and PDGFRB. In terms of processing, activated by proteolytic cleavage. Proteolytic removal of the N-terminal CUB domain releasing the core domain is necessary for unmasking the receptor-binding epitopes of the core domain. Cleavage after Arg-247 or Arg-249 by urokinase plasminogen activator gives rise to the active form. In terms of tissue distribution, expressed at high levels in developing heart, lung, kidney and some muscle derivatives. Moderately expressed in liver, brain and testis. In the kidney, localized to glomerular mesangial cells and vascular smooth muscle cells. Up-regulated in areas of renal fibrosis. In mice with unilateral ureteral obstruction, expressed in interstitial cells at day 4, with an increased to maximal expression at day 14.

The protein resides in the secreted. Functionally, growth factor that plays an essential role in the regulation of embryonic development, cell proliferation, cell migration, survival and chemotaxis. Potent mitogen for cells of mesenchymal origin. Plays an important role in wound healing. Has oncogenic potential and can induce tumor formation. Induces macrophage recruitment, increased interstitial pressure, and blood vessel maturation during angiogenesis. Can initiate events that lead to a mesangial proliferative glomerulonephritis, including influx of monocytes and macrophages and production of extracellular matrix. The protein is Platelet-derived growth factor D (Pdgfd) of Mus musculus (Mouse).